The sequence spans 419 residues: Zinc finger protein Pegasus (419 aa).

A Glycyl lysine isopeptide (Lys-Gly) (interchain with G-Cter in SUMO2) cross-link involves residue Lys-5. 3 consecutive C2H2-type zinc fingers follow at residues 82-104, 110-132, and 138-161; these read LKCRYCNYASKGTARLIEHIRIH, HRCHLCPFASAYERHLEAHMRSH, and YKCELCSFRCSDRSNLSHHRRRKH. Lys-185 is covalently cross-linked (Glycyl lysine isopeptide (Lys-Gly) (interchain with G-Cter in SUMO2)). Polar residues-rich tracts occupy residues 223–236 and 262–273; these read QTDSYESMAKTTPT and LSSLPPENQNPA. Disordered regions lie at residues 223–247 and 262–356; these read QTDSYESMAKTTPTGGLPRDPQELM and LSSL…PALP. Positions 290 to 311 are enriched in low complexity; it reads QPSTQAVVSAVSASIPQSSSPT. A compositionally biased stretch (polar residues) spans 332-349; it reads SEPSAHTSTPSIGNSQPS. 2 consecutive C2H2-type zinc fingers follow at residues 364–386 and 392–416; these read HHCQHCDMYFADNILYTIHMGCH and FQCNICGCKCKNKYDFACHFARGQH.

It belongs to the Ikaros C2H2-type zinc-finger protein family. As to quaternary structure, self-associates. Interacts with other family members; IKZF1, IKZF2, IKZF3 and IKZF4. Expressed in brain, heart, skeletal muscle, kidney, and liver. Expressed in the hematopoietic cell lines MOLT-4, NALM-6 and K-562. Highly expressed in THP-1 and M-07e cell lines, which have characteristics of myeloid and early megakaryocytic cells respectively.

Its subcellular location is the nucleus. Transcriptional repressor that binds the core 5'GNNTGTNG-3' DNA consensus sequence. Involved in megakaryocyte differentiation. The chain is Zinc finger protein Pegasus (IKZF5) from Homo sapiens (Human).